A 589-amino-acid chain; its full sequence is Coronatine-insensitive protein homolog 2 (589 aa).

The F-box domain maps to Ile18 to Val59. The jasmonate site is built by Arg87, Arg352, Arg414, and Arg501.

In terms of assembly, interacts with TIFY9/JAZ5, TIFY11C/JAZ11 and TIFY11D/JAZ12 in a coronatine-dependent manner.

Its function is as follows. Involved in jasmonate (JA) signaling. Required for jasmonate signaling in plant defense responses. Component of SCF(COI1) E3 ubiquitin ligase complexes, which may mediate the ubiquitination and subsequent proteasomal degradation of target proteins, including TIFY/JAZ family. This Oryza sativa subsp. indica (Rice) protein is Coronatine-insensitive protein homolog 2.